Here is a 363-residue protein sequence, read N- to C-terminus: Probable butyrate kinase (363 aa).

Belongs to the acetokinase family.

The protein localises to the cytoplasm. The catalysed reaction is butanoate + ATP = butanoyl phosphate + ADP. The sequence is that of Probable butyrate kinase from Maridesulfovibrio salexigens (strain ATCC 14822 / DSM 2638 / NCIMB 8403 / VKM B-1763) (Desulfovibrio salexigens).